The chain runs to 415 residues: Multidrug resistance protein MdtA (415 aa).

Residues 1–21 (MKGSYKSRWVIVIVVVIAAIA) form the signal peptide. Residues 31 to 46 (DSQSAAPGATKQAQQS) show a composition bias toward polar residues. Disordered regions lie at residues 31–56 (DSQS…GMRA) and 391–415 (VEAQ…GARS). Residues 399-415 (PEEKATSREYAKKGARS) are compositionally biased toward basic and acidic residues.

The protein belongs to the membrane fusion protein (MFP) (TC 8.A.1) family. As to quaternary structure, part of a tripartite efflux system composed of MdtA, MdtB and MdtC.

The protein localises to the cell inner membrane. The MdtABC tripartite complex confers resistance against novobiocin and deoxycholate. This Escherichia coli O45:K1 (strain S88 / ExPEC) protein is Multidrug resistance protein MdtA.